A 683-amino-acid chain; its full sequence is DNA ligase (683 aa).

NAD(+) is bound by residues 35–39 (DADYD), 84–85 (SL), and glutamate 115. Lysine 117 (N6-AMP-lysine intermediate) is an active-site residue. NAD(+) is bound by residues arginine 138, glutamate 175, lysine 293, and lysine 317. 4 residues coordinate Zn(2+): cysteine 411, cysteine 414, cysteine 429, and cysteine 435. The 86-residue stretch at 598-683 (QTNSAVSGKT…LQNISTGAQQ (86 aa)) folds into the BRCT domain.

The protein belongs to the NAD-dependent DNA ligase family. LigA subfamily. Mg(2+) is required as a cofactor. Mn(2+) serves as cofactor.

It carries out the reaction NAD(+) + (deoxyribonucleotide)n-3'-hydroxyl + 5'-phospho-(deoxyribonucleotide)m = (deoxyribonucleotide)n+m + AMP + beta-nicotinamide D-nucleotide.. In terms of biological role, DNA ligase that catalyzes the formation of phosphodiester linkages between 5'-phosphoryl and 3'-hydroxyl groups in double-stranded DNA using NAD as a coenzyme and as the energy source for the reaction. It is essential for DNA replication and repair of damaged DNA. The protein is DNA ligase of Nitrosomonas eutropha (strain DSM 101675 / C91 / Nm57).